The sequence spans 286 residues: Lipoyl synthase (286 aa).

Residues Cys38, Cys43, Cys49, Cys64, Cys68, Cys71, and Ser276 each contribute to the [4Fe-4S] cluster site. One can recognise a Radical SAM core domain in the interval 50 to 265; sequence WEQGVATFMI…ENIALDMGFL (216 aa).

It belongs to the radical SAM superfamily. Lipoyl synthase family. Requires [4Fe-4S] cluster as cofactor.

It is found in the cytoplasm. It carries out the reaction [[Fe-S] cluster scaffold protein carrying a second [4Fe-4S](2+) cluster] + N(6)-octanoyl-L-lysyl-[protein] + 2 oxidized [2Fe-2S]-[ferredoxin] + 2 S-adenosyl-L-methionine + 4 H(+) = [[Fe-S] cluster scaffold protein] + N(6)-[(R)-dihydrolipoyl]-L-lysyl-[protein] + 4 Fe(3+) + 2 hydrogen sulfide + 2 5'-deoxyadenosine + 2 L-methionine + 2 reduced [2Fe-2S]-[ferredoxin]. Its pathway is protein modification; protein lipoylation via endogenous pathway; protein N(6)-(lipoyl)lysine from octanoyl-[acyl-carrier-protein]: step 2/2. Functionally, catalyzes the radical-mediated insertion of two sulfur atoms into the C-6 and C-8 positions of the octanoyl moiety bound to the lipoyl domains of lipoate-dependent enzymes, thereby converting the octanoylated domains into lipoylated derivatives. This is Lipoyl synthase from Karelsulcia muelleri (strain GWSS) (Sulcia muelleri).